A 178-amino-acid polypeptide reads, in one-letter code: Heavy metal-associated isoprenylated plant protein 30 (178 aa).

The HMA domain occupies 45-108; the sequence is LQTIDLKVRM…AVRRAGKRAE (64 aa). C56 and C59 together coordinate a metal cation. Position 175 is a cysteine methyl ester (C175). The S-farnesyl cysteine moiety is linked to residue C175. A propeptide spans 176-178 (removed in mature form); that stretch reads SLM.

The protein belongs to the HIPP family. Interacts with ZHD3/HB21, ZHD11/HB29 and ZHD8/HB30.

In terms of biological role, heavy-metal-binding protein. The chain is Heavy metal-associated isoprenylated plant protein 30 from Arabidopsis thaliana (Mouse-ear cress).